Reading from the N-terminus, the 613-residue chain is Dihydroxy-acid dehydratase (613 aa).

Asp-81 lines the Mg(2+) pocket. Cys-122 provides a ligand contact to [2Fe-2S] cluster. Mg(2+) contacts are provided by Asp-123 and Lys-124. Lys-124 carries the post-translational modification N6-carboxylysine. [2Fe-2S] cluster is bound at residue Cys-195. A Mg(2+)-binding site is contributed by Glu-491. Ser-517 acts as the Proton acceptor in catalysis.

It belongs to the IlvD/Edd family. In terms of assembly, homodimer. The cofactor is [2Fe-2S] cluster. Requires Mg(2+) as cofactor.

The catalysed reaction is (2R)-2,3-dihydroxy-3-methylbutanoate = 3-methyl-2-oxobutanoate + H2O. It carries out the reaction (2R,3R)-2,3-dihydroxy-3-methylpentanoate = (S)-3-methyl-2-oxopentanoate + H2O. It participates in amino-acid biosynthesis; L-isoleucine biosynthesis; L-isoleucine from 2-oxobutanoate: step 3/4. It functions in the pathway amino-acid biosynthesis; L-valine biosynthesis; L-valine from pyruvate: step 3/4. In terms of biological role, functions in the biosynthesis of branched-chain amino acids. Catalyzes the dehydration of (2R,3R)-2,3-dihydroxy-3-methylpentanoate (2,3-dihydroxy-3-methylvalerate) into 2-oxo-3-methylpentanoate (2-oxo-3-methylvalerate) and of (2R)-2,3-dihydroxy-3-methylbutanoate (2,3-dihydroxyisovalerate) into 2-oxo-3-methylbutanoate (2-oxoisovalerate), the penultimate precursor to L-isoleucine and L-valine, respectively. The polypeptide is Dihydroxy-acid dehydratase (Vibrio parahaemolyticus serotype O3:K6 (strain RIMD 2210633)).